Here is a 505-residue protein sequence, read N- to C-terminus: Probable bifunctional methylthioribulose-1-phosphate dehydratase/enolase-phosphatase E1 (505 aa).

Residues 1–237 are methylthioribulose-1-phosphate dehydratase; the sequence is MGLDKDGISN…ALKLHQLGLD (237 aa). A substrate-binding site is contributed by cysteine 109. Residues histidine 127 and histidine 129 each coordinate Zn(2+). Glutamate 152 serves as the catalytic Proton donor/acceptor; for methylthioribulose-1-phosphate dehydratase activity. Residue histidine 202 participates in Zn(2+) binding. Residues 266 to 505 form an enolase-phosphatase E1 region; it reads FVLDIEGTTT…FRTAKSLLEL (240 aa). 2 residues coordinate Mg(2+): aspartate 269 and glutamate 271. Residues 404–405 and lysine 438 contribute to the substrate site; that span reads SS. Aspartate 464 is a binding site for Mg(2+).

The protein in the N-terminal section; belongs to the aldolase class II family. MtnB subfamily. It in the C-terminal section; belongs to the HAD-like hydrolase superfamily. MasA/MtnC family. Zn(2+) serves as cofactor. Requires Mg(2+) as cofactor.

The catalysed reaction is 5-(methylsulfanyl)-D-ribulose 1-phosphate = 5-methylsulfanyl-2,3-dioxopentyl phosphate + H2O. It carries out the reaction 5-methylsulfanyl-2,3-dioxopentyl phosphate + H2O = 1,2-dihydroxy-5-(methylsulfanyl)pent-1-en-3-one + phosphate. It functions in the pathway amino-acid biosynthesis; L-methionine biosynthesis via salvage pathway; L-methionine from S-methyl-5-thio-alpha-D-ribose 1-phosphate: step 2/6. The protein operates within amino-acid biosynthesis; L-methionine biosynthesis via salvage pathway; L-methionine from S-methyl-5-thio-alpha-D-ribose 1-phosphate: step 3/6. Its pathway is amino-acid biosynthesis; L-methionine biosynthesis via salvage pathway; L-methionine from S-methyl-5-thio-alpha-D-ribose 1-phosphate: step 4/6. The chain is Probable bifunctional methylthioribulose-1-phosphate dehydratase/enolase-phosphatase E1 from Physcomitrium patens (Spreading-leaved earth moss).